A 450-amino-acid chain; its full sequence is Exodeoxyribonuclease 7 large subunit (450 aa).

It belongs to the XseA family. Heterooligomer composed of large and small subunits.

The protein resides in the cytoplasm. It catalyses the reaction Exonucleolytic cleavage in either 5'- to 3'- or 3'- to 5'-direction to yield nucleoside 5'-phosphates.. In terms of biological role, bidirectionally degrades single-stranded DNA into large acid-insoluble oligonucleotides, which are then degraded further into small acid-soluble oligonucleotides. The chain is Exodeoxyribonuclease 7 large subunit from Listeria innocua serovar 6a (strain ATCC BAA-680 / CLIP 11262).